Reading from the N-terminus, the 649-residue chain is Centrosomal protein of 63 kDa-A (649 aa).

2 coiled-coil regions span residues 19–185 and 222–556; these read DSCE…YQHQ and EEEL…DAAS. Phosphoserine; by atm and atr is present on Ser-560. The stretch at 612-645 forms a coiled coil; the sequence is FLQEEEQRSHELLQRLNAHIEELKQESQRTVEHF.

Belongs to the CEP63 family. In terms of processing, phosphorylation at Ser-560 by atm and atr promotes its delocalization from the centrosome and impairs its ability to promote centrosome dependent spindle assembly.

The protein localises to the cytoplasm. It is found in the cytoskeleton. Its subcellular location is the microtubule organizing center. The protein resides in the centrosome. It localises to the centriole. Functionally, required for normal spindle assembly. Plays a key role in mother-centriole-dependent centriole duplication. Plays a role in DNA damage response. Following DNA damage, such as double-strand breaks (DSBs), is removed from centrosomes; this leads to the inactivation of spindle assembly and delay in mitotic progression. The protein is Centrosomal protein of 63 kDa-A (cep63-a) of Xenopus laevis (African clawed frog).